Consider the following 434-residue polypeptide: 3-phosphoshikimate 1-carboxyvinyltransferase (434 aa).

3-phosphoshikimate-binding residues include Lys-15, Ser-16, and Arg-20. Lys-15 is a phosphoenolpyruvate binding site. Phosphoenolpyruvate is bound by residues Gly-96 and Arg-124. Residues Ser-169, Gln-171, Ser-195, Asp-319, and Lys-346 each coordinate 3-phosphoshikimate. A phosphoenolpyruvate-binding site is contributed by Gln-171. Asp-319 (proton acceptor) is an active-site residue. Phosphoenolpyruvate-binding residues include Arg-350 and Arg-394.

The protein belongs to the EPSP synthase family. As to quaternary structure, monomer.

It is found in the cytoplasm. It catalyses the reaction 3-phosphoshikimate + phosphoenolpyruvate = 5-O-(1-carboxyvinyl)-3-phosphoshikimate + phosphate. It participates in metabolic intermediate biosynthesis; chorismate biosynthesis; chorismate from D-erythrose 4-phosphate and phosphoenolpyruvate: step 6/7. Functionally, catalyzes the transfer of the enolpyruvyl moiety of phosphoenolpyruvate (PEP) to the 5-hydroxyl of shikimate-3-phosphate (S3P) to produce enolpyruvyl shikimate-3-phosphate and inorganic phosphate. In Chlorobaculum parvum (strain DSM 263 / NCIMB 8327) (Chlorobium vibrioforme subsp. thiosulfatophilum), this protein is 3-phosphoshikimate 1-carboxyvinyltransferase.